A 206-amino-acid polypeptide reads, in one-letter code: Thymidylate kinase (206 aa).

7–14 is an ATP binding site; the sequence is GGEGSGKS.

The protein belongs to the thymidylate kinase family.

It catalyses the reaction dTMP + ATP = dTDP + ADP. Functionally, phosphorylation of dTMP to form dTDP in both de novo and salvage pathways of dTTP synthesis. The chain is Thymidylate kinase (tmk) from Chlamydia pneumoniae (Chlamydophila pneumoniae).